The sequence spans 64 residues: Frontoxin IV (64 aa).

Disulfide bonds link Cys-3/Cys-24, Cys-6/Cys-11, Cys-17/Cys-41, Cys-45/Cys-57, and Cys-58/Cys-63.

In terms of tissue distribution, expressed by the venom gland.

The protein resides in the secreted. Its function is as follows. Produces peripheral paralysis by blocking neuromuscular transmission at the postsynaptic site. Binds to the muscular nicotinic acetylcholine receptor (nAChR). The sequence is that of Frontoxin IV from Micrurus frontalis (Coral snake).